A 522-amino-acid chain; its full sequence is Na(+)/H(+) antiporter NhaB (522 aa).

11 helical membrane passes run 25–45, 49–69, 87–107, 128–162, 201–221, 237–257, 302–322, 356–376, 388–408, 446–466, and 476–496; these read VFLV…GWLL, FIFT…GMLA, ILAN…IYFM, LSLA…FYGV, LMMH…VGEP, FFFR…VTCI, VFVG…VGLI, LVVF…APVI, LLLF…VFVA, ATPN…SPLI, and MALP…EYVL.

The protein belongs to the NhaB Na(+)/H(+) (TC 2.A.34) antiporter family.

It is found in the cell inner membrane. The catalysed reaction is 2 Na(+)(in) + 3 H(+)(out) = 2 Na(+)(out) + 3 H(+)(in). Functionally, na(+)/H(+) antiporter that extrudes sodium in exchange for external protons. The chain is Na(+)/H(+) antiporter NhaB from Actinobacillus succinogenes (strain ATCC 55618 / DSM 22257 / CCUG 43843 / 130Z).